A 160-amino-acid polypeptide reads, in one-letter code: MLHLTIVAVGRVREKYLVAGIEEYLKRLRPYARVRILEAPEEKVPDKPSPAGVEQILASEGRGIGRLIPPSSFTVALDREGVMLSSEELAGRLADLALAGKNEVALIIGGTLGLATFILQQADLRLSFSRFTFPHQLMRLILLEQLYRAFKIQRGETYHR.

S-adenosyl-L-methionine contacts are provided by leucine 77 and glycine 109.

Belongs to the RNA methyltransferase RlmH family. In terms of assembly, homodimer.

It is found in the cytoplasm. It catalyses the reaction pseudouridine(1915) in 23S rRNA + S-adenosyl-L-methionine = N(3)-methylpseudouridine(1915) in 23S rRNA + S-adenosyl-L-homocysteine + H(+). Its function is as follows. Specifically methylates the pseudouridine at position 1915 (m3Psi1915) in 23S rRNA. This chain is Ribosomal RNA large subunit methyltransferase H, found in Moorella thermoacetica (strain ATCC 39073 / JCM 9320).